Here is a 510-residue protein sequence, read N- to C-terminus: Probable malate:quinone oxidoreductase (510 aa).

Belongs to the MQO family. It depends on FAD as a cofactor.

It carries out the reaction (S)-malate + a quinone = a quinol + oxaloacetate. Its pathway is carbohydrate metabolism; tricarboxylic acid cycle; oxaloacetate from (S)-malate (quinone route): step 1/1. This is Probable malate:quinone oxidoreductase from Wigglesworthia glossinidia brevipalpis.